The sequence spans 514 residues: MQQLNPSEISEIIKGRIDNLDVSSQARNEGTVVSVSDGIVRIHGLADVMYGEMIEFPGSVYGMALNLEQDSVGAVILGAYDTLAEGMSAKCTGRILEVPVGKELLGRVVDALGNPIDGKGPLGNTQTDAVEKVAPGVIWRKSVDQPVQTGYKSVDAMIPVGRGQRELIIGDRQIGKTAMAIDAIINQKDSGIFCVYVAVGQKRSTVANIVRKLEETGALANTIVVVASASESAALQFLAPYAGCTMGEFFRDRGEDALIVYDDLSKQAVAYRQISLLLRRPPGREAYPGDVFYLHSRLLERASRVSEEYVEKFTNGAVTGKTGSLTALPIIETQAGDVSAFVPTNVISITDGQIFLESAMFNSGIRPAVNAGVSVSRVGGAAQTKIIKKLSGGIRTALAQYRELAAFAQFASDLDEATRKQLEHGQRVTELMKQKQYAPMSIADMALSLYAAERGFLIDVEVSKIGSFEQALIAFFNRDHAELMAKINVKGDFNDEIDAGLKAGIEKFKATQTW.

170–177 (GDRQIGKT) contacts ATP.

This sequence belongs to the ATPase alpha/beta chains family. In terms of assembly, F-type ATPases have 2 components, CF(1) - the catalytic core - and CF(0) - the membrane proton channel. CF(1) has five subunits: alpha(3), beta(3), gamma(1), delta(1), epsilon(1). CF(0) has three main subunits: a(1), b(2) and c(9-12). The alpha and beta chains form an alternating ring which encloses part of the gamma chain. CF(1) is attached to CF(0) by a central stalk formed by the gamma and epsilon chains, while a peripheral stalk is formed by the delta and b chains.

It localises to the cell inner membrane. It carries out the reaction ATP + H2O + 4 H(+)(in) = ADP + phosphate + 5 H(+)(out). Its function is as follows. Produces ATP from ADP in the presence of a proton gradient across the membrane. The alpha chain is a regulatory subunit. The chain is ATP synthase subunit alpha from Pseudomonas putida (strain ATCC 47054 / DSM 6125 / CFBP 8728 / NCIMB 11950 / KT2440).